Consider the following 1995-residue polypeptide: Myosin-14 (1995 aa).

The tract at residues methionine 1–proline 46 is disordered. Alanine 2 is modified (N-acetylalanine). The Myosin N-terminal SH3-like domain occupies threonine 51–proline 101. Serine 60 carries the phosphoserine modification. In terms of domain architecture, Myosin motor spans serine 105–aspartate 800. Glycine 198–threonine 205 is a binding site for ATP. Positions leucine 678–histidine 700 are actin-binding. The region spanning valine 803–alanine 832 is the IQ domain. The stretch at leucine 862–arginine 1947 forms a coiled coil. The residue at position 1194 (threonine 1194) is a Phosphothreonine. 4 disordered regions span residues glutamate 1371–alanine 1415, glutamine 1592–aspartate 1623, glutamate 1905–arginine 1942, and arginine 1958–glutamine 1995. The segment covering serine 1930–arginine 1942 has biased composition (polar residues). Phosphoserine occurs at positions 1969, 1980, 1983, and 1989. Residues glycine 1981–glutamine 1995 are compositionally biased toward pro residues.

Belongs to the TRAFAC class myosin-kinesin ATPase superfamily. Myosin family. Myosin is a hexameric protein that consists of 2 heavy chain subunits (MHC), 2 alkali light chain subunits (MLC) and 2 regulatory light chain subunits (MLC-2). In terms of tissue distribution, high levels of expression are found in brain (highest in corpus callosum), heart, kidney, liver, lung, small intestine, colon and skeletal muscle. Expression is low in organs composed mainly of smooth muscle, such as aorta, uterus and urinary bladder. No detectable expression is found in thymus, spleen, placenta and lymphocytes.

Functionally, cellular myosin that appears to play a role in cytokinesis, cell shape, and specialized functions such as secretion and capping. The polypeptide is Myosin-14 (MYH14) (Homo sapiens (Human)).